The sequence spans 159 residues: Ribosomal RNA large subunit methyltransferase H (159 aa).

S-adenosyl-L-methionine is bound by residues Leu76, Gly108, and 127–132 (FGKLTL).

It belongs to the RNA methyltransferase RlmH family. Homodimer.

It is found in the cytoplasm. It catalyses the reaction pseudouridine(1915) in 23S rRNA + S-adenosyl-L-methionine = N(3)-methylpseudouridine(1915) in 23S rRNA + S-adenosyl-L-homocysteine + H(+). Functionally, specifically methylates the pseudouridine at position 1915 (m3Psi1915) in 23S rRNA. This is Ribosomal RNA large subunit methyltransferase H from Latilactobacillus sakei subsp. sakei (strain 23K) (Lactobacillus sakei subsp. sakei).